An 838-amino-acid polypeptide reads, in one-letter code: Translation initiation factor IF-2 (838 aa).

Positions 1 to 235 (MSDTDGKKPL…RSLAAMKREQ (235 aa)) are disordered. Positions 18–27 (SGQVKQSFSH) are enriched in polar residues. The segment covering 50 to 60 (SGSSTTTSSPS) has biased composition (low complexity). Residues 88-156 (KLREVDDAKR…AARRAEEAKR (69 aa)) are compositionally biased toward basic and acidic residues. Low complexity predominate over residues 162-177 (PAAAQPDAADSRASAP). The segment covering 187–208 (SRKEREREADRDRTTKKDDSRR) has biased composition (basic and acidic residues). In terms of domain architecture, tr-type G spans 335 to 509 (PRPPIITIMG…ELLDLRANPK (175 aa)). A G1 region spans residues 344–351 (GHVDHGKT). A GTP-binding site is contributed by 344-351 (GHVDHGKT). The interval 369–373 (GITQH) is G2. Positions 391 to 394 (DTPG) are G3. Residues 391–395 (DTPGH) and 445–448 (NKID) contribute to the GTP site. The G4 stretch occupies residues 445-448 (NKID). The segment at 481 to 483 (SAK) is G5.

It belongs to the TRAFAC class translation factor GTPase superfamily. Classic translation factor GTPase family. IF-2 subfamily.

Its subcellular location is the cytoplasm. One of the essential components for the initiation of protein synthesis. Protects formylmethionyl-tRNA from spontaneous hydrolysis and promotes its binding to the 30S ribosomal subunits. Also involved in the hydrolysis of GTP during the formation of the 70S ribosomal complex. In Cereibacter sphaeroides (strain ATCC 17025 / ATH 2.4.3) (Rhodobacter sphaeroides), this protein is Translation initiation factor IF-2.